Consider the following 102-residue polypeptide: Large ribosomal subunit protein bL21 (102 aa).

Belongs to the bacterial ribosomal protein bL21 family. In terms of assembly, part of the 50S ribosomal subunit. Contacts protein L20.

Functionally, this protein binds to 23S rRNA in the presence of protein L20. The protein is Large ribosomal subunit protein bL21 of Phytoplasma mali (strain AT).